A 556-amino-acid chain; its full sequence is 2-succinyl-5-enolpyruvyl-6-hydroxy-3-cyclohexene-1-carboxylate synthase (556 aa).

Belongs to the TPP enzyme family. MenD subfamily. Homodimer. Mg(2+) is required as a cofactor. It depends on Mn(2+) as a cofactor. The cofactor is thiamine diphosphate.

It catalyses the reaction isochorismate + 2-oxoglutarate + H(+) = 5-enolpyruvoyl-6-hydroxy-2-succinyl-cyclohex-3-ene-1-carboxylate + CO2. The protein operates within quinol/quinone metabolism; 1,4-dihydroxy-2-naphthoate biosynthesis; 1,4-dihydroxy-2-naphthoate from chorismate: step 2/7. It functions in the pathway quinol/quinone metabolism; menaquinone biosynthesis. Functionally, catalyzes the thiamine diphosphate-dependent decarboxylation of 2-oxoglutarate and the subsequent addition of the resulting succinic semialdehyde-thiamine pyrophosphate anion to isochorismate to yield 2-succinyl-5-enolpyruvyl-6-hydroxy-3-cyclohexene-1-carboxylate (SEPHCHC). The polypeptide is 2-succinyl-5-enolpyruvyl-6-hydroxy-3-cyclohexene-1-carboxylate synthase (Escherichia coli (strain K12 / MC4100 / BW2952)).